Consider the following 227-residue polypeptide: Deoxyribose-phosphate aldolase (227 aa).

Aspartate 84 acts as the Proton donor/acceptor in catalysis. Lysine 146 (schiff-base intermediate with acetaldehyde) is an active-site residue. Catalysis depends on lysine 188, which acts as the Proton donor/acceptor.

Belongs to the DeoC/FbaB aldolase family. DeoC type 1 subfamily.

It localises to the cytoplasm. The enzyme catalyses 2-deoxy-D-ribose 5-phosphate = D-glyceraldehyde 3-phosphate + acetaldehyde. It functions in the pathway carbohydrate degradation; 2-deoxy-D-ribose 1-phosphate degradation; D-glyceraldehyde 3-phosphate and acetaldehyde from 2-deoxy-alpha-D-ribose 1-phosphate: step 2/2. Catalyzes a reversible aldol reaction between acetaldehyde and D-glyceraldehyde 3-phosphate to generate 2-deoxy-D-ribose 5-phosphate. The sequence is that of Deoxyribose-phosphate aldolase from Pyrobaculum islandicum (strain DSM 4184 / JCM 9189 / GEO3).